Here is a 154-residue protein sequence, read N- to C-terminus: Large ribosomal subunit protein uL13 (154 aa).

It belongs to the universal ribosomal protein uL13 family. As to quaternary structure, part of the 50S ribosomal subunit.

Functionally, this protein is one of the early assembly proteins of the 50S ribosomal subunit, although it is not seen to bind rRNA by itself. It is important during the early stages of 50S assembly. The sequence is that of Large ribosomal subunit protein uL13 from Sinorhizobium medicae (strain WSM419) (Ensifer medicae).